We begin with the raw amino-acid sequence, 78 residues long: U5-ctenitoxin-Pk1a (78 aa).

Intrachain disulfides connect Cys6–Cys23, Cys13–Cys29, Cys20–Cys52, Cys22–Cys40, Cys31–Cys38, Cys58–Cys73, and Cys69–Cys77.

Expressed by the venom gland.

The protein localises to the secreted. Its function is as follows. Lethal neurotoxin. Causes spastic paralysis and death in mice in 4-6 minutes after intracerebroventricular injection at dose levels of 1.5 ug per mouse. The chain is U5-ctenitoxin-Pk1a from Phoneutria keyserlingi (Brazilian wandering spider).